The chain runs to 1401 residues: DNA-directed RNA polymerase subunit beta' (1401 aa).

Zn(2+)-binding residues include cysteine 70, cysteine 72, cysteine 85, and cysteine 88. The Mg(2+) site is built by aspartate 460, aspartate 462, and aspartate 464. Positions 808, 882, 889, and 892 each coordinate Zn(2+).

This sequence belongs to the RNA polymerase beta' chain family. As to quaternary structure, the RNAP catalytic core consists of 2 alpha, 1 beta, 1 beta' and 1 omega subunit. When a sigma factor is associated with the core the holoenzyme is formed, which can initiate transcription. Requires Mg(2+) as cofactor. Zn(2+) is required as a cofactor.

It catalyses the reaction RNA(n) + a ribonucleoside 5'-triphosphate = RNA(n+1) + diphosphate. In terms of biological role, DNA-dependent RNA polymerase catalyzes the transcription of DNA into RNA using the four ribonucleoside triphosphates as substrates. The chain is DNA-directed RNA polymerase subunit beta' from Legionella pneumophila (strain Lens).